The sequence spans 369 residues: MSKPLSDLSAAGVAVWLDDISRERIRTGNLAELARTRSVVGVTSNPTIFQKAIGGGETYNEQLRDLAVRGVDVGEAVRAITAADIRDACDILRPAYDASAGVDGRVSLEVDPRLAHETERTVAEARALWWSVDRPNLFIKIPATKSGLPAITATLAQGISVNVTLIFALDRYEAVMDAFMTGLEQALAAGRDISDVASVASFFVSRVDSEVDGRLAKIGTPKAEALRSKAAIANARLAYELYEKIFSTPRWERLAAAGAKPQRPLWASTSTKDPGLPDTLYVTELIAPGTVNTMPEATLEAFADHGVVPGDTITPNYEDARAVLAELTELGVDMADVVEVLEVEGVRKFEDSWNQLLDTIREQLGSAAS.

Catalysis depends on Lys-140, which acts as the Schiff-base intermediate with substrate.

Belongs to the transaldolase family. Type 2 subfamily.

It is found in the cytoplasm. It catalyses the reaction D-sedoheptulose 7-phosphate + D-glyceraldehyde 3-phosphate = D-erythrose 4-phosphate + beta-D-fructose 6-phosphate. It functions in the pathway carbohydrate degradation; pentose phosphate pathway; D-glyceraldehyde 3-phosphate and beta-D-fructose 6-phosphate from D-ribose 5-phosphate and D-xylulose 5-phosphate (non-oxidative stage): step 2/3. Transaldolase is important for the balance of metabolites in the pentose-phosphate pathway. In Parafrankia sp. (strain EAN1pec), this protein is Transaldolase.